The primary structure comprises 502 residues: MLVTAGSLLGAIWTVLHLRILLLAAVTFLFLADFLKHRRPKNYPPGPWRLPLVGCLFHLDPKQPHLSLQQFVKKYGNVLSLDFANIPSVVVTGMPLIKEIFTQMEHNFLNRPVTLLRKHLFNKNGLIFSSGQTWKEQRRFALMTLRNFGLGKKSLEQRIQEEAYHLVEAIKDEGGLPFDPHFNINKAVSNIICSVTFGERFEYHDSQFQEMLRLLDEAMCLESSMMCQLYNIFPRILQYLPGSHQTLFSNWRKLKLFISDIIKNHRRDWDPDEPRDFIDAFLKEMAKYPDKTTTSFNEENLICSTLDLFFAGTETTSTTLRWALLCMALYPEVQEKMQAEIDRVIGQGRQPNLADRDSMPYTNAVIHEVQRIGNIIPFNVPREVAVDTYLAGFNLPKGTMILTNLTALHRDPKEWATPDTFNPEHFLENGQFKKRESFLPFSMGKRACLGEQLARSELFIFITSLIQKFTFKPPVNEKLSLQFRMSVTISPVSHRLCAIPRL.

Cys-448 is a binding site for heme.

The protein belongs to the cytochrome P450 family. Heme is required as a cofactor. As to expression, abundantly expressed in heart and liver.

The protein resides in the endoplasmic reticulum membrane. It localises to the microsome membrane. The enzyme catalyses an organic molecule + reduced [NADPH--hemoprotein reductase] + O2 = an alcohol + oxidized [NADPH--hemoprotein reductase] + H2O + H(+). This enzyme metabolizes arachidonic acid predominantly via a NADPH-dependent olefin epoxidation mainly to 14,15-, 11,12-, and 8,9-epoxyeicosatrienoic acids (EET). It also acts as an omega-1-hydroxylase by metabolizing arachidonic acid to 19-hydroxyeicosatetraenoic acid (19-OH-AA). This is Cytochrome P450 2J3 (Cyp2j3) from Rattus norvegicus (Rat).